The chain runs to 136 residues: Translation initiation factor 5A (136 aa).

Position 38 is a hypusine (Lys38).

The protein belongs to the eIF-5A family.

It localises to the cytoplasm. Functionally, functions by promoting the formation of the first peptide bond. The sequence is that of Translation initiation factor 5A from Methanopyrus kandleri (strain AV19 / DSM 6324 / JCM 9639 / NBRC 100938).